A 224-amino-acid polypeptide reads, in one-letter code: UPF0173 metal-dependent hydrolase Memar_1421 (224 aa).

Belongs to the UPF0173 family.

This is UPF0173 metal-dependent hydrolase Memar_1421 from Methanoculleus marisnigri (strain ATCC 35101 / DSM 1498 / JR1).